A 211-amino-acid chain; its full sequence is Arginine exporter protein ArgO (211 aa).

The Cytoplasmic segment spans residues 1–38; it reads MFSYYFQGLALGAAMILPLGPQNAFVMNQGIRRQYHIM. A helical transmembrane segment spans residues 39 to 58; it reads IALLCAISDLVLICAGIFGG. Topologically, residues 59-63 are periplasmic; the sequence is SALLM. A helical membrane pass occupies residues 64–91; the sequence is QSPWLLALVTWGGVAFLLWYGFGAFKTA. The Cytoplasmic portion of the chain corresponds to 92–102; the sequence is MSSNIELASAE. The helical transmembrane segment at 103-130 threads the bilayer; the sequence is VMKQGRWKIIATMLAVTWLNPHVYLDTF. Topologically, residues 131–140 are periplasmic; it reads VVLGSLGGQL. Residues 141–170 traverse the membrane as a helical segment; the sequence is DVEPKRWFALGTISASFLWFFGLALLAAWL. Topologically, residues 171-173 are cytoplasmic; that stretch reads APR. A helical membrane pass occupies residues 174-200; the sequence is LRTAKAQRIINLVVGCVMWFIALQLAR. Over 201 to 211 the chain is Periplasmic; the sequence is DGIAHAQALFS.

This sequence belongs to the LysE/ArgO transporter (TC 2.A.75) family. In terms of assembly, monomer.

The protein resides in the cell inner membrane. It catalyses the reaction L-arginine(in) = L-arginine(out). Involved in the export of arginine. Important to control the intracellular level of arginine and the correct balance between arginine and lysine. May also be involved in the export of canavanine (a plant-derived antimetabolite). This Escherichia coli (strain K12) protein is Arginine exporter protein ArgO.